Here is a 158-residue protein sequence, read N- to C-terminus: Putative pre-16S rRNA nuclease (158 aa).

It belongs to the YqgF nuclease family.

The protein resides in the cytoplasm. Its function is as follows. Could be a nuclease involved in processing of the 5'-end of pre-16S rRNA. The polypeptide is Putative pre-16S rRNA nuclease (Paracoccus denitrificans (strain Pd 1222)).